The chain runs to 343 residues: Probable transposase for insertion sequence element (343 aa).

Belongs to the transposase mutator family.

Its function is as follows. Required for the transposition of the insertion element. The sequence is that of Probable transposase for insertion sequence element from Corynebacterium diphtheriae.